The sequence spans 151 residues: Ribosome maturation factor RimP (151 aa).

The protein belongs to the RimP family.

Its subcellular location is the cytoplasm. Required for maturation of 30S ribosomal subunits. This chain is Ribosome maturation factor RimP, found in Shewanella putrefaciens (strain CN-32 / ATCC BAA-453).